We begin with the raw amino-acid sequence, 255 residues long: ATP synthase subunit a (255 aa).

6 consecutive transmembrane segments (helical) span residues 28–48, 86–106, 125–145, 164–184, 203–223, and 224–244; these read VDSLIMSFSLGALFCYLFWLG, IAPLALTIFCWIFLMNLMDLV, ILPTVDLNVTFALSISVFFLI, FHPFGPWLLPFNLILNIIELI, LIFILISLLPWWIQWALGTPW, and AIFHILVIPLQAFIFMMLTVV.

It belongs to the ATPase A chain family. F-type ATPases have 2 components, CF(1) - the catalytic core - and CF(0) - the membrane proton channel. CF(1) has five subunits: alpha(3), beta(3), gamma(1), delta(1), epsilon(1). CF(0) has three main subunits: a(1), b(2) and c(9-12). The alpha and beta chains form an alternating ring which encloses part of the gamma chain. CF(1) is attached to CF(0) by a central stalk formed by the gamma and epsilon chains, while a peripheral stalk is formed by the delta and b chains.

Its subcellular location is the cell inner membrane. Key component of the proton channel; it plays a direct role in the translocation of protons across the membrane. The protein is ATP synthase subunit a of Alkalilimnicola ehrlichii (strain ATCC BAA-1101 / DSM 17681 / MLHE-1).